An 85-amino-acid polypeptide reads, in one-letter code: Small ribosomal subunit protein uS17 (85 aa).

It belongs to the universal ribosomal protein uS17 family. As to quaternary structure, part of the 30S ribosomal subunit.

Functionally, one of the primary rRNA binding proteins, it binds specifically to the 5'-end of 16S ribosomal RNA. In Citrifermentans bemidjiense (strain ATCC BAA-1014 / DSM 16622 / JCM 12645 / Bem) (Geobacter bemidjiensis), this protein is Small ribosomal subunit protein uS17.